A 158-amino-acid chain; its full sequence is Pathogenesis-related protein 2 (158 aa).

It belongs to the BetVI family.

The polypeptide is Pathogenesis-related protein 2 (PR2) (Petroselinum crispum (Parsley)).